We begin with the raw amino-acid sequence, 353 residues long: MTAILERRESTSLWGRFCNWITSTENRLYIGWFGVLMIPTLLTATSVFIIAFIAAPPVDIDGIREPVSGSLLYGNNIISGAIIPTSAAIGLHFYPIWEAASVDEWLYNGGPYELIVLHFLLGVACYMGREWELSFRLGMRPWIAVAYSAPVAAATAVFLIYPIGQGSFSDGMPLGISGTFNFMIVFQAEHNILMHPFHMLGVAGVFGGSLFSAMHGSLVTSSLIRETTENESANEGYKFGQEEETYNIVAAHGYFGRLIFQYASFNNSRSLHFFLAAWPVVGIWFTALGISTMAFNLNGFNFNQSVVDSQGRVINTWADIINRANLGMEVMHERNAHNFPLDLAALEVPSING.

Thr-2 bears the N-acetylthreonine mark. Thr-2 is modified (phosphothreonine). The next 3 membrane-spanning stretches (helical) occupy residues 29–46, 118–133, and 142–156; these read YIGW…TATS, HFLL…EWEL, and WIAV…AATA. His-118 lines the chlorophyll a pocket. Residue Tyr-126 coordinates pheophytin a. [CaMn4O5] cluster-binding residues include Asp-170 and Glu-189. The chain crosses the membrane as a helical span at residues 197–218; the sequence is FHMLGVAGVFGGSLFSAMHGSL. His-198 is a binding site for chlorophyll a. Residues His-215 and 264-265 each bind a quinone; that span reads SF. His-215 lines the Fe cation pocket. His-272 contacts Fe cation. Residues 274-288 form a helical membrane-spanning segment; sequence FLAAWPVVGIWFTAL. Residues His-332, Glu-333, Asp-342, and Ala-344 each contribute to the [CaMn4O5] cluster site. The propeptide occupies 345–353; it reads ALEVPSING.

Belongs to the reaction center PufL/M/PsbA/D family. PSII is composed of 1 copy each of membrane proteins PsbA, PsbB, PsbC, PsbD, PsbE, PsbF, PsbH, PsbI, PsbJ, PsbK, PsbL, PsbM, PsbT, PsbX, PsbY, PsbZ, Psb30/Ycf12, at least 3 peripheral proteins of the oxygen-evolving complex and a large number of cofactors. It forms dimeric complexes. It depends on The D1/D2 heterodimer binds P680, chlorophylls that are the primary electron donor of PSII, and subsequent electron acceptors. It shares a non-heme iron and each subunit binds pheophytin, quinone, additional chlorophylls, carotenoids and lipids. D1 provides most of the ligands for the Mn4-Ca-O5 cluster of the oxygen-evolving complex (OEC). There is also a Cl(-1) ion associated with D1 and D2, which is required for oxygen evolution. The PSII complex binds additional chlorophylls, carotenoids and specific lipids. as a cofactor. Post-translationally, tyr-161 forms a radical intermediate that is referred to as redox-active TyrZ, YZ or Y-Z. In terms of processing, C-terminally processed by CTPA; processing is essential to allow assembly of the oxygen-evolving complex and thus photosynthetic growth.

The protein localises to the plastid. The protein resides in the chloroplast thylakoid membrane. The catalysed reaction is 2 a plastoquinone + 4 hnu + 2 H2O = 2 a plastoquinol + O2. Photosystem II (PSII) is a light-driven water:plastoquinone oxidoreductase that uses light energy to abstract electrons from H(2)O, generating O(2) and a proton gradient subsequently used for ATP formation. It consists of a core antenna complex that captures photons, and an electron transfer chain that converts photonic excitation into a charge separation. The D1/D2 (PsbA/PsbD) reaction center heterodimer binds P680, the primary electron donor of PSII as well as several subsequent electron acceptors. The polypeptide is Photosystem II protein D1 (Agrostis stolonifera (Creeping bentgrass)).